Here is a 218-residue protein sequence, read N- to C-terminus: Ribose-5-phosphate isomerase A (218 aa).

Residues 28-31 (TGST), 81-84 (DGAD), and 94-97 (KGGG) each bind substrate. The active-site Proton acceptor is the Glu-103. Lys-121 is a binding site for substrate.

Belongs to the ribose 5-phosphate isomerase family. Homodimer.

It carries out the reaction aldehydo-D-ribose 5-phosphate = D-ribulose 5-phosphate. It functions in the pathway carbohydrate degradation; pentose phosphate pathway; D-ribose 5-phosphate from D-ribulose 5-phosphate (non-oxidative stage): step 1/1. In terms of biological role, catalyzes the reversible conversion of ribose-5-phosphate to ribulose 5-phosphate. The sequence is that of Ribose-5-phosphate isomerase A from Shewanella woodyi (strain ATCC 51908 / MS32).